The following is a 171-amino-acid chain: Crossover junction endodeoxyribonuclease RuvC (171 aa).

Active-site residues include Asp11, Glu71, and Asp143. Residues Asp11, Glu71, and Asp143 each contribute to the Mg(2+) site.

Belongs to the RuvC family. In terms of assembly, homodimer which binds Holliday junction (HJ) DNA. The HJ becomes 2-fold symmetrical on binding to RuvC with unstacked arms; it has a different conformation from HJ DNA in complex with RuvA. In the full resolvosome a probable DNA-RuvA(4)-RuvB(12)-RuvC(2) complex forms which resolves the HJ. It depends on Mg(2+) as a cofactor.

Its subcellular location is the cytoplasm. It carries out the reaction Endonucleolytic cleavage at a junction such as a reciprocal single-stranded crossover between two homologous DNA duplexes (Holliday junction).. The RuvA-RuvB-RuvC complex processes Holliday junction (HJ) DNA during genetic recombination and DNA repair. Endonuclease that resolves HJ intermediates. Cleaves cruciform DNA by making single-stranded nicks across the HJ at symmetrical positions within the homologous arms, yielding a 5'-phosphate and a 3'-hydroxyl group; requires a central core of homology in the junction. The consensus cleavage sequence is 5'-(A/T)TT(C/G)-3'. Cleavage occurs on the 3'-side of the TT dinucleotide at the point of strand exchange. HJ branch migration catalyzed by RuvA-RuvB allows RuvC to scan DNA until it finds its consensus sequence, where it cleaves and resolves the cruciform DNA. This is Crossover junction endodeoxyribonuclease RuvC from Chelativorans sp. (strain BNC1).